Reading from the N-terminus, the 231-residue chain is Putative 3-methyladenine DNA glycosylase (231 aa).

This sequence belongs to the DNA glycosylase MPG family.

The sequence is that of Putative 3-methyladenine DNA glycosylase from Pseudomonas fluorescens (strain Pf0-1).